Here is a 188-residue protein sequence, read N- to C-terminus: Early nodulin-like protein 5 (188 aa).

A signal peptide spans 1–24 (MDSSKKIIIVMFLVTFYMFSCVSS). Positions 25 to 128 (TEFEVGGENG…GQKMIVKVME (104 aa)) constitute a Phytocyanin domain. Cysteine 82 and cysteine 116 are disulfide-bonded. Residues 127–157 (METESSTESPPPSSSSSSSSSSSLPASTPKA) form a disordered region. Over residues 129–155 (TESSTESPPPSSSSSSSSSSSLPASTP) the composition is skewed to low complexity. Residue serine 170 is the site of GPI-anchor amidated serine attachment. Residues 171-188 (SSGFVVSAVLIVSVFGLV) constitute a propeptide, removed in mature form.

This sequence belongs to the early nodulin-like (ENODL) family. Mostly expressed in leaves and flowers, and, to a lower extent, in stems.

The protein resides in the cell membrane. May act as a carbohydrate transporter. Mainly required for reproductive functions. In Arabidopsis thaliana (Mouse-ear cress), this protein is Early nodulin-like protein 5.